We begin with the raw amino-acid sequence, 647 residues long: Denticleless protein homolog (647 aa).

7 WD repeats span residues 48-88 (AAAV…KQSS), 95-134 (AHDNAVFDIAWVPGTNCLVTASGDQTARLWDVITGDLLGT), 137-177 (GHQC…KDGF), 209-248 (DSQQGVTVVLFCDETKLISSGAVDGIIKMWDLRRNYTAYH), 264-303 (TRKLGYSGLSLDYTGSRLFSNCTDDNIYMFNISGLKTTPV), 308-349 (GHSN…QAPM), and 353-393 (GHSQ…EGEN). 2 short sequence motifs (DDB1-binding motif) span residues 167–170 (WDTR) and 238–241 (WDLR). Disordered stretches follow at residues 410-487 (QSPN…SKSP) and 534-647 (KRSR…RTQD). Polar residues-rich tracts occupy residues 426–443 (PSKNPGSVRSVSLASPQP) and 471–486 (KMPSSLQQWISRSSKS). Over residues 543–558 (LKKEDSFGLESEKRLG) the composition is skewed to basic and acidic residues. Positions 586–600 (KGSAQPKSPSSGSSQ) are enriched in low complexity.

This sequence belongs to the WD repeat cdt2 family. Component of the DCX(DTL) E3 ubiquitin ligase complex, at least composed of cul4 (cul4a or cul4b), ddb1, dtl/cdt2 and rbx1.

The protein localises to the nucleus. Its subcellular location is the cytoplasm. The protein resides in the cytoskeleton. It localises to the microtubule organizing center. It is found in the centrosome. The protein localises to the chromosome. Its pathway is protein modification; protein ubiquitination. Substrate-specific adapter of a DCX (DDB1-CUL4-X-box) E3 ubiquitin-protein ligase complex required for cell cycle control, DNA damage response and translesion DNA synthesis. The DCX(DTL) complex, also named CRL4(CDT2) complex, mediates the polyubiquitination and subsequent degradation of CDT1, CDKN1A/p21(CIP1), KMT5A and SDE2. CDT1 degradation in response to DNA damage is necessary to ensure proper cell cycle regulation of DNA replication. CDKN1A/p21(CIP1) degradation during S phase or following UV irradiation is essential to control replication licensing. KMT5A degradation is also important for a proper regulation of mechanisms such as TGF-beta signaling, cell cycle progression, DNA repair and cell migration. Most substrates require their interaction with PCNA for their polyubiquitination: substrates interact with PCNA via their PIP-box, and those containing the 'K+4' motif in the PIP box, recruit the DCX(DTL) complex, leading to their degradation. In undamaged proliferating cells, the DCX(DTL) complex also promotes the 'Lys-164' monoubiquitination of PCNA, thereby being involved in PCNA-dependent translesion DNA synthesis. May play a role in the regulation of the circadian clock. The chain is Denticleless protein homolog (dtl) from Danio rerio (Zebrafish).